We begin with the raw amino-acid sequence, 158 residues long: Putative zinc-binding protein ORF9 (158 aa).

Residues 72–111 (CPVCGRAVVGPTVREACGHVTCNACETEACAVDRLCIGGG) form an RING-type; degenerate zinc finger. The tract at residues 126-158 (GPRWRGPRPTRPEAHEAVQRSRGSSEDACTCAP) is disordered. The span at 135–150 (TRPEAHEAVQRSRGSS) shows a compositional bias: basic and acidic residues.

This Ictalurid herpesvirus 1 (strain Auburn) (IcHV-1) protein is Putative zinc-binding protein ORF9 (ORF9).